The primary structure comprises 657 residues: Sodium/glucose cotransporter 4 (657 aa).

The Extracellular portion of the chain corresponds to 1-24; sequence MPASPEPVTATPEPEEVPAKFTLE. A helical membrane pass occupies residues 25–45; that stretch reads AADIAVVVVYFVFVLAVGIWS. The Cytoplasmic segment spans residues 46–79; it reads SIRANRGTVGGYFLAGRSMTWWPIGASLMSSNVG. Residues 80–100 form a helical membrane-spanning segment; it reads SGLFIGLAGTGAAGGLAVGGF. Residues 101-104 lie on the Extracellular side of the membrane; that stretch reads EWNA. Residues 105 to 125 form a helical membrane-spanning segment; it reads AWVLIALGWIFVPVYISAGVV. At 126-147 the chain is on the cytoplasmic side; sequence TMPEYLRKRFGGQRIRIYMSVL. A helical transmembrane segment spans residues 148-168; that stretch reads SLILYILTKISTDIFSGALFI. Residues 169 to 180 are Extracellular-facing; the sequence is QVSLGWDLYLST. Residues 181-201 form a helical membrane-spanning segment; it reads VILLAVTALYTIAGGLTAVIY. The Cytoplasmic portion of the chain corresponds to 202-207; that stretch reads TDALQT. The chain crosses the membrane as a helical span at residues 208 to 228; it reads VIMVIGAFVLMFIAFDKVGWY. The Extracellular portion of the chain corresponds to 229 to 265; sequence EGLLVQYEKAAPALTVPNTTCHLPRSDAFHIFRDPVT. N246 is a glycosylation site (N-linked (GlcNAc...) asparagine). The helical transmembrane segment at 266-286 threads the bilayer; it reads GDIPWPGLIFGLTVLATWVWC. Over 287–307 the chain is Cytoplasmic; that stretch reads TDQVIVQRSLSAKNLSHAKAG. A helical membrane pass occupies residues 308–328; it reads SVLGGYLKVFPMFFVVMPGMI. Residues 329–373 lie on the Extracellular side of the membrane; that stretch reads SRALYPDEVACVDPDECQKICGAKVGCSNIAYPKLVVELMPVGMR. The chain crosses the membrane as a helical span at residues 374 to 396; it reads GLMIAVMMAALMSSLTSIFNSSS. At 397–417 the chain is on the cytoplasmic side; sequence TLFTMDIWQRIRPRASEKELM. The helical transmembrane segment at 418-438 threads the bilayer; the sequence is VVGRVFILLLVALSIVWIPVI. The Extracellular segment spans residues 439–451; that stretch reads QTANSGQLFDYIQ. Residues 452–472 form a helical membrane-spanning segment; that stretch reads AITSFLSPPITTVFIMAIFWG. Over 473-478 the chain is Cytoplasmic; sequence RVNEQG. The helical transmembrane segment at 479–499 threads the bilayer; that stretch reads AFWGLMVGLVVGMVRMIMEFV. The Extracellular segment spans residues 500–520; sequence YGTPSCGETDLRPSLLKDVHY. The helical transmembrane segment at 521–541 threads the bilayer; that stretch reads LYFALILLALTVLIITAVSLC. At 542–636 the chain is on the cytoplasmic side; that stretch reads TAPIPEKHLV…SIEEDHMWKT (95 aa). Residues 637 to 657 traverse the membrane as a helical segment; it reads VCNVNALILLTANVFLWGYFA.

This sequence belongs to the sodium:solute symporter (SSF) (TC 2.A.21) family.

It localises to the membrane. Functionally, probable sodium-dependent sugar transporter. This is Sodium/glucose cotransporter 4 (slc5a9) from Danio rerio (Zebrafish).